We begin with the raw amino-acid sequence, 52 residues long: EDLQGDAVPEEXATKDDNEHPQTLLLTNVEFNXRPFVLIIYDRNTKSPLFVG.

Residues 1–20 (EDLQGDAVPEEXATKDDNEH) are disordered.

It belongs to the serpin family. Post-translationally, N-glycosylated; contains glycans with bi- and triantennary side chains. Plasma.

It is found in the secreted. This is Alpha-1-antiproteinase 3 from Equus caballus (Horse).